A 795-amino-acid chain; its full sequence is MKFSELWLREWVNPAIDSDALANQITMAGLEVDGVEPVAGSFHGVVVGEVVECAQHPNADKLRVTKVNVGGDRLLDIVCGAPNCRQGLRVAVATIGAVLPGDFKIKAAKLRGEPSEGMLCSFSELGISDDHNGIIELPADAPIGTDIREYLKLDDNTIEISVTPNRADCLGIIGVARDVAVLNQLPLVEPEIVPVGATIDDTLPITVEAPEACPRYLGRVVKGINVKAPTPLWMKEKLRRCGIRSIDAVVDVTNYVLLELGQPMHAFDKDRIEGGIVVRMAKEGETLVLLDGTEAKLNADTLVIADHNKALAMGGIFGGEHSGVNDETQNVLLECAFFSPLSITGRARRHGLHTDASHRYERGVDPALQYKAMERATRLLIDICGGEAGPVIDITNEATLPKRATITLRRSKLDRLIGHHIADEQVTDILRRLGCEVTEGKDEWQAVAPSWRFDMEIEEDLVEEVARVYGYNNIPDEPVQASLIMGTHREADLSLKRVKTLLNDKGYQEVITYSFVDPKVQQMIHPGVEALLLPSPISVEMSAMRLSLWTGLLATVVYNQNRQQNRVRIFESGLRFVPDTQAPLGIRQDLMLAGVICGNRYEEHWNLAKETVDFYDLKGDLESVLDLTGKLNEVEFRAEANPALHPGQSAAIYLKGERIGFVGVVHPELERKLDLNGRTLVFELEWNKLADRVVPQAREISRFPANRRDIAVVVAENVPAADILSECKKVGVNQVVGVNLFDVYRGKGVAEGYKSLAISLILQDTSRTLEEEEIAATVAKCVEALKERFQASLRD.

The region spanning 39–148 (AGSFHGVVVG…ADAPIGTDIR (110 aa)) is the tRNA-binding domain. The B5 domain occupies 401-476 (PKRATITLRR…RVYGYNNIPD (76 aa)). Positions 454, 460, 463, and 464 each coordinate Mg(2+). One can recognise an FDX-ACB domain in the interval 701–794 (SRFPANRRDI…LKERFQASLR (94 aa)).

Belongs to the phenylalanyl-tRNA synthetase beta subunit family. Type 1 subfamily. As to quaternary structure, tetramer of two alpha and two beta subunits. Requires Mg(2+) as cofactor.

It is found in the cytoplasm. The enzyme catalyses tRNA(Phe) + L-phenylalanine + ATP = L-phenylalanyl-tRNA(Phe) + AMP + diphosphate + H(+). The polypeptide is Phenylalanine--tRNA ligase beta subunit (Escherichia coli O157:H7).